A 282-amino-acid chain; its full sequence is HTH-type transcriptional activator RhaR (282 aa).

The region spanning 179–277 (DKLITRLAAS…GMTPSQWRHL (99 aa)) is the HTH araC/xylS-type domain. 2 DNA-binding regions (H-T-H motif) span residues 196 to 217 (DKFCDEASCSERVLRQQFRQQT) and 244 to 267 (ISDISTECGFEDSNYFSVVFTRET).

Binds DNA as a dimer.

The protein localises to the cytoplasm. Functionally, activates expression of the rhaSR operon in response to L-rhamnose. The protein is HTH-type transcriptional activator RhaR of Escherichia coli (strain K12 / MC4100 / BW2952).